We begin with the raw amino-acid sequence, 106 residues long: Large ribosomal subunit protein bL21 (106 aa).

Belongs to the bacterial ribosomal protein bL21 family. In terms of assembly, part of the 50S ribosomal subunit. Contacts protein L20.

Its function is as follows. This protein binds to 23S rRNA in the presence of protein L20. This Syntrophobacter fumaroxidans (strain DSM 10017 / MPOB) protein is Large ribosomal subunit protein bL21.